A 288-amino-acid chain; its full sequence is 4-diphosphocytidyl-2-C-methyl-D-erythritol kinase (288 aa).

Lys11 is an active-site residue. 93–103 (PFGAGLGGGSS) is an ATP binding site. Residue Asp135 is part of the active site.

This sequence belongs to the GHMP kinase family. IspE subfamily.

It catalyses the reaction 4-CDP-2-C-methyl-D-erythritol + ATP = 4-CDP-2-C-methyl-D-erythritol 2-phosphate + ADP + H(+). The protein operates within isoprenoid biosynthesis; isopentenyl diphosphate biosynthesis via DXP pathway; isopentenyl diphosphate from 1-deoxy-D-xylulose 5-phosphate: step 3/6. Functionally, catalyzes the phosphorylation of the position 2 hydroxy group of 4-diphosphocytidyl-2C-methyl-D-erythritol. The chain is 4-diphosphocytidyl-2-C-methyl-D-erythritol kinase from Chlorobium limicola (strain DSM 245 / NBRC 103803 / 6330).